The primary structure comprises 302 residues: Citrate lyase subunit beta (302 aa).

The substrate site is built by Arg-76 and Glu-139. Residues Glu-139 and Asp-166 each contribute to the Mg(2+) site.

The protein belongs to the HpcH/HpaI aldolase family. Citrate lyase beta subunit subfamily. In terms of assembly, oligomer with a subunit composition of (alpha,beta,gamma)6. Requires Mg(2+) as cofactor.

The protein resides in the cytoplasm. It catalyses the reaction citrate = oxaloacetate + acetate. The catalysed reaction is (3S)-citryl-CoA = oxaloacetate + acetyl-CoA. Functionally, represents a citryl-ACP lyase. The chain is Citrate lyase subunit beta (citE) from Escherichia coli O6:H1 (strain CFT073 / ATCC 700928 / UPEC).